A 127-amino-acid polypeptide reads, in one-letter code: Aspartate 1-decarboxylase (127 aa).

The Schiff-base intermediate with substrate; via pyruvic acid role is filled by Ser25. Ser25 is subject to Pyruvic acid (Ser). Thr57 lines the substrate pocket. Catalysis depends on Tyr58, which acts as the Proton donor. Position 73–75 (73–75 (GAA)) interacts with substrate.

Belongs to the PanD family. In terms of assembly, heterooctamer of four alpha and four beta subunits. It depends on pyruvate as a cofactor. In terms of processing, is synthesized initially as an inactive proenzyme, which is activated by self-cleavage at a specific serine bond to produce a beta-subunit with a hydroxyl group at its C-terminus and an alpha-subunit with a pyruvoyl group at its N-terminus.

The protein resides in the cytoplasm. It catalyses the reaction L-aspartate + H(+) = beta-alanine + CO2. It functions in the pathway cofactor biosynthesis; (R)-pantothenate biosynthesis; beta-alanine from L-aspartate: step 1/1. Catalyzes the pyruvoyl-dependent decarboxylation of aspartate to produce beta-alanine. In Listeria innocua serovar 6a (strain ATCC BAA-680 / CLIP 11262), this protein is Aspartate 1-decarboxylase.